The primary structure comprises 198 residues: Guanylate kinase (198 aa).

A Guanylate kinase-like domain is found at G8–V188. G15–S22 lines the ATP pocket.

It belongs to the guanylate kinase family.

It localises to the cytoplasm. The catalysed reaction is GMP + ATP = GDP + ADP. Its function is as follows. Essential for recycling GMP and indirectly, cGMP. The sequence is that of Guanylate kinase from Mycobacterium sp. (strain MCS).